A 268-amino-acid chain; its full sequence is Zinc transporter ZupT (268 aa).

A run of 8 helical transmembrane segments spans residues 6–26 (IIFA…GGVI), 37–57 (FLAG…FVEI), 73–93 (GGNW…AVID), 126–146 (VLTA…TFVA), 153–173 (IAIP…IAVA), 189–209 (WATL…ILLM), 211–231 (FLGP…MVFI), and 248–268 (TAIY…LLFI). Positions 136 and 139 each coordinate Fe(2+). Residues E139 and H164 each coordinate Zn(2+). Fe(2+)-binding residues include N165, E168, and E197. E168 lines the Zn(2+) pocket.

Belongs to the ZIP transporter (TC 2.A.5) family. ZupT subfamily.

It localises to the cell membrane. The catalysed reaction is Zn(2+)(in) = Zn(2+)(out). In terms of biological role, mediates zinc uptake. May also transport other divalent cations. This is Zinc transporter ZupT from Corynebacterium efficiens (strain DSM 44549 / YS-314 / AJ 12310 / JCM 11189 / NBRC 100395).